The chain runs to 604 residues: Putative ankyrin repeat protein L56 (604 aa).

13 ANK repeats span residues Ile77 to Val106, Phe135 to Gly164, Leu166 to Asn189, Thr190 to Arg219, Asn221 to Ile247, Asp248 to Tyr277, Lys314 to Val341, Asp342 to Asp371, Glu380 to Tyr410, Tyr445 to Pro474, Ile475 to Ile504, Asn505 to Thr534, and Asp535 to Asn565.

The protein is Putative ankyrin repeat protein L56 of Acanthamoeba polyphaga (Amoeba).